Here is a 156-residue protein sequence, read N- to C-terminus: MADIKSRHFPRSANKRGAARLAAVQALYQMDIVGSGVMETAAEYEAYRLGKDIDGDQYLDADFQWFLAIITGVVQDQKQLDPLLHQQLSAEWSLSRLDSILRAILRAALWELINRKDVPVAVVVNEYVDIAKAFFEGDEPKLVNAVLDSMAKKIRL.

The protein belongs to the NusB family.

In terms of biological role, involved in transcription antitermination. Required for transcription of ribosomal RNA (rRNA) genes. Binds specifically to the boxA antiterminator sequence of the ribosomal RNA (rrn) operons. This chain is Transcription antitermination protein NusB, found in Bartonella tribocorum (strain CIP 105476 / IBS 506).